The sequence spans 210 residues: Thymidylate kinase (210 aa).

10–17 is an ATP binding site; that stretch reads GPEGAGKS.

It belongs to the thymidylate kinase family.

The catalysed reaction is dTMP + ATP = dTDP + ADP. Functionally, phosphorylation of dTMP to form dTDP in both de novo and salvage pathways of dTTP synthesis. This Pseudomonas syringae pv. syringae (strain B728a) protein is Thymidylate kinase.